The sequence spans 300 residues: 4-hydroxy-tetrahydrodipicolinate synthase (300 aa).

Residue Thr-56 participates in pyruvate binding. The active-site Proton donor/acceptor is the Tyr-145. Lys-173 acts as the Schiff-base intermediate with substrate in catalysis. A pyruvate-binding site is contributed by Val-215.

It belongs to the DapA family. Homotetramer; dimer of dimers.

The protein localises to the cytoplasm. The catalysed reaction is L-aspartate 4-semialdehyde + pyruvate = (2S,4S)-4-hydroxy-2,3,4,5-tetrahydrodipicolinate + H2O + H(+). It functions in the pathway amino-acid biosynthesis; L-lysine biosynthesis via DAP pathway; (S)-tetrahydrodipicolinate from L-aspartate: step 3/4. In terms of biological role, catalyzes the condensation of (S)-aspartate-beta-semialdehyde [(S)-ASA] and pyruvate to 4-hydroxy-tetrahydrodipicolinate (HTPA). The protein is 4-hydroxy-tetrahydrodipicolinate synthase of Prochlorococcus marinus (strain MIT 9301).